The following is a 40-amino-acid chain: uncharacterized protein (40 aa).

This is an uncharacterized protein from Escherichia coli (Bacteriophage T4).